The primary structure comprises 154 residues: MPNTDVSSLSMLGQQTETAQSPEEAVLEKVPSNHAGTDYVVRFTAPEFTSLCPMTGQPDFAHIVIDYIPGEWLVESKSLKLFLHSFRNHGAFHEDCSIYIAKRIVELLDPRWLRIGAYWYPRGGIPIDVFWQTGKPPEGVWLPEQGVATYRGRG.

Over residues 1 to 21 (MPNTDVSSLSMLGQQTETAQS) the composition is skewed to polar residues. Residues 1–28 (MPNTDVSSLSMLGQQTETAQSPEEAVLE) are disordered. The Thioimide intermediate role is filled by Cys52. Asp59 functions as the Proton donor in the catalytic mechanism. Substrate is bound by residues 74 to 76 (VES) and 93 to 94 (HE).

Belongs to the GTP cyclohydrolase I family. QueF type 1 subfamily.

It localises to the cytoplasm. The enzyme catalyses 7-aminomethyl-7-carbaguanine + 2 NADP(+) = 7-cyano-7-deazaguanine + 2 NADPH + 3 H(+). It participates in tRNA modification; tRNA-queuosine biosynthesis. Catalyzes the NADPH-dependent reduction of 7-cyano-7-deazaguanine (preQ0) to 7-aminomethyl-7-deazaguanine (preQ1). The polypeptide is NADPH-dependent 7-cyano-7-deazaguanine reductase (Rhizobium johnstonii (strain DSM 114642 / LMG 32736 / 3841) (Rhizobium leguminosarum bv. viciae)).